A 313-amino-acid polypeptide reads, in one-letter code: D-alanine--D-alanine ligase (313 aa).

The ATP-grasp domain maps to 114–309; that stretch reads KWLWKGVGLP…FSKLVLKLIS (196 aa). Position 142-195 (142-195) interacts with ATP; the sequence is DLTFPVIVKPSHEGSSIGMRKVDTLDALQEAVDFAQQYDSEILIEQWITGREFT. D263, E276, and N278 together coordinate Mg(2+).

It belongs to the D-alanine--D-alanine ligase family. Requires Mg(2+) as cofactor. The cofactor is Mn(2+).

The protein localises to the cytoplasm. The catalysed reaction is 2 D-alanine + ATP = D-alanyl-D-alanine + ADP + phosphate + H(+). The protein operates within cell wall biogenesis; peptidoglycan biosynthesis. Cell wall formation. The protein is D-alanine--D-alanine ligase of Hydrogenovibrio crunogenus (strain DSM 25203 / XCL-2) (Thiomicrospira crunogena).